The primary structure comprises 778 residues: Semaphorin-3ab (778 aa).

The signal sequence occupies residues 1–17 (MDYLWWIVLLIWTLIAP). Positions 32-515 (RLKPSYKEML…SAIGVSQMPL (484 aa)) constitute a Sema domain. Asn-54 carries N-linked (GlcNAc...) asparagine glycosylation. Cys-105 and Cys-116 are oxidised to a cystine. Residue Asn-127 is glycosylated (N-linked (GlcNAc...) asparagine). Cystine bridges form between Cys-134–Cys-143, Cys-270–Cys-382, Cys-294–Cys-342, and Cys-518–Cys-536. The Ig-like C2-type domain maps to 579-668 (GEAGLLDKTV…FIQTLLRLTL (90 aa)). The N-linked (GlcNAc...) asparagine glycan is linked to Asn-593. A disulfide bridge links Cys-652 with Cys-716. The segment at 727–778 (RRQKANLLHASQSHTSQILHSSQSHAKWKLLQENKKGRNRRTHEMQRAPRSV) is disordered. Over residues 735–751 (HASQSHTSQILHSSQSH) the composition is skewed to polar residues. The segment covering 756–778 (LLQENKKGRNRRTHEMQRAPRSV) has biased composition (basic and acidic residues).

It belongs to the semaphorin family. In terms of tissue distribution, expressed in rhombomeres three and five, and in the posterior half of newly formed somites which is avoided by ventrally extending motor axons.

The protein localises to the secreted. Functionally, might normally influence the midsegmental pathway choice of the ventrally extending motor axons by contributing to a repulsive domain in the posterior somite. This chain is Semaphorin-3ab (sema3ab), found in Danio rerio (Zebrafish).